A 217-amino-acid polypeptide reads, in one-letter code: Probable transaldolase (217 aa).

Lysine 83 serves as the catalytic Schiff-base intermediate with substrate.

This sequence belongs to the transaldolase family. Type 3B subfamily.

The protein localises to the cytoplasm. It catalyses the reaction D-sedoheptulose 7-phosphate + D-glyceraldehyde 3-phosphate = D-erythrose 4-phosphate + beta-D-fructose 6-phosphate. It functions in the pathway carbohydrate degradation; pentose phosphate pathway; D-glyceraldehyde 3-phosphate and beta-D-fructose 6-phosphate from D-ribose 5-phosphate and D-xylulose 5-phosphate (non-oxidative stage): step 2/3. Its function is as follows. Transaldolase is important for the balance of metabolites in the pentose-phosphate pathway. The protein is Probable transaldolase of Brucella melitensis biotype 1 (strain ATCC 23456 / CCUG 17765 / NCTC 10094 / 16M).